We begin with the raw amino-acid sequence, 1226 residues long: E3 ubiquitin-protein ligase mind-bomb (1226 aa).

A compositionally biased stretch (polar residues) spans 1–12; that stretch reads MSCAATLSSAKD. 2 disordered regions span residues 1–42 and 66–87; these read MSCA…NTNT and GGGGSLPGGTTSSSSASAAGGV. Residues 19-30 are compositionally biased toward gly residues; sequence SGGGGGGGGGGA. Composition is skewed to low complexity over residues 31–42 and 73–86; these read PTNSNTNTNTNT and GGTTSSSSASAAGG. The region spanning 100–168 is the MIB/HERC2 1 domain; it reads VRRFSMEGVG…AYDLRILDSA (69 aa). A ZZ-type zinc finger spans residues 174-226; sequence HEGTMCDTCRQQPIFGIRWKCAECINYDLCSICYHGDKHHLRHRFYRITTPGG. Residues Cys-179, Cys-182, Cys-194, Cys-197, Cys-203, Cys-206, His-212, and His-216 each coordinate Zn(2+). The 79-residue stretch at 237–315 folds into the MIB/HERC2 2 domain; that stretch reads SKKVLARGIF…MADLKVVNDA (79 aa). ANK repeat units lie at residues 567–596, 600–629, 633–662, 666–695, 699–731, 735–765, 769–798, and 802–833; these read AGHTALQAASQNGHIEVIQVLLRHAVDVEI, DGDRAVHHAAFGDEAAVIEILAKAGADLNA, RRQTSLHIAVNKGHLNVVKTLLTLGCHPSL, EGDTPLHDAISKEHDEMLSLLLDFGADITL, NGFNALHHAALKGNPSAMKILLTKTNRPWIVEE, DGYTALHLAALNNHVEIAELLVHMGKANMDR, NLQTALHLAVERQHVQIVKLLVQDGADLNI, and DGDTPLHEALRHHTLSQLKQLQDVEGFGKLLM. Positions 890–919 are disordered; the sequence is TDDSELPGNVAGTSSSARARAASGSLNQSS. Residues 900–914 show a composition bias toward low complexity; that stretch reads AGTSSSARARAASGS. 2 consecutive RING-type zinc fingers follow at residues 970 to 1005 and 1017 to 1052; these read CLVCSDAKRDTVFKPCGHVSCCETCAPRVKKCLICR and CLVCSDRRAAVFFRPCGHMVACEHCSALMKKCVLCR. Residues 1159–1181 are a coiled coil; the sequence is VNNFQMDDVQKLKQQLQDIKEQT. An RING-type 3 zinc finger spans residues 1183–1216; the sequence is CPVCFDRIKNMVFLCGHGTCQMCGDQIEGCPICR.

Interacts with intracellular domain of Dl and Ser. As to expression, ubiquitous in the wing imaginal disk (at protein level).

Its subcellular location is the cytoplasm. It is found in the cell cortex. The catalysed reaction is S-ubiquitinyl-[E2 ubiquitin-conjugating enzyme]-L-cysteine + [acceptor protein]-L-lysine = [E2 ubiquitin-conjugating enzyme]-L-cysteine + N(6)-ubiquitinyl-[acceptor protein]-L-lysine.. The protein operates within protein modification; protein ubiquitination. E3 ubiquitin-protein ligase that mediates ubiquitination of Delta (Dl) and Serrate (Ser) receptors, which act as ligands of Notch proteins. Positively regulates the Notch signaling by ubiquitinating the intracellular domain of Dl and Ser, leading to endocytosis of Dl and Ser receptors. Regulates a subset of Notch signaling events, including wing margin specification, leg segmentation and vein determination, that are distinct from those events requiring neuralize (neur) activity. Also modulates lateral inhibition, a neur- and Dl-dependent signaling event, suggesting a distinct but partially complementary function with neur. The sequence is that of E3 ubiquitin-protein ligase mind-bomb (mib1) from Drosophila melanogaster (Fruit fly).